The chain runs to 350 residues: [LysW]-L-2-aminoadipate/[LysW]-L-glutamate phosphate reductase (350 aa).

An NADP(+)-binding site is contributed by 10-13 (SGYT). The active site involves cysteine 150. Asparagine 317 is an NADP(+) binding site.

The protein belongs to the NAGSA dehydrogenase family. Type 1 subfamily. LysY sub-subfamily.

Its subcellular location is the cytoplasm. It carries out the reaction [amino-group carrier protein]-C-terminal-N-(1-carboxy-5-oxopentan-1-yl)-L-glutamine + phosphate + NADP(+) = [amino-group carrier protein]-C-terminal-N-(1-carboxy-5-phosphooxy-5-oxopentan-1-yl)-L-glutamine + NADPH + H(+). The catalysed reaction is [amino-group carrier protein]-C-terminal-gamma-(L-glutamyl-5-semialdehyde)-L-glutamate + phosphate + NADP(+) = [amino-group carrier protein]-C-terminal-gamma-(5-phospho-L-glutamyl)-L-glutamate + NADPH + H(+). The protein operates within amino-acid biosynthesis; L-lysine biosynthesis via AAA pathway; L-lysine from L-alpha-aminoadipate (Thermus route): step 3/5. Its pathway is amino-acid biosynthesis; L-arginine biosynthesis. Involved in both the arginine and lysine biosynthetic pathways. The protein is [LysW]-L-2-aminoadipate/[LysW]-L-glutamate phosphate reductase of Sulfolobus acidocaldarius (strain ATCC 33909 / DSM 639 / JCM 8929 / NBRC 15157 / NCIMB 11770).